The following is a 1052-amino-acid chain: Focal adhesion kinase 1 (1052 aa).

The disordered stretch occupies residues 1 to 27 (MAAAYLDPNLNHTPSSSTKTHLGTGME). Residue A2 is modified to N-acetylalanine. The residue at position 5 (Y5) is a Phosphotyrosine. The segment covering 10–21 (LNHTPSSSTKTH) has biased composition (polar residues). A Phosphothreonine modification is found at T13. Residues S29 and S54 each carry the phosphoserine modification. One can recognise an FERM domain in the interval 35–355 (RVLKVFHYFE…GYCRLVNGAT (321 aa)). K152 is covalently cross-linked (Glycyl lysine isopeptide (Lys-Gly) (interchain with G-Cter in SUMO)). A phosphotyrosine mark is found at Y397 and Y407. Y397 carries the post-translational modification Phosphotyrosine; by autocatalysis. ATP contacts are provided by residues 428–434 (IGEGQFG), K454, and 500–502 (ELC). The Protein kinase domain occupies 431 to 680 (GQFGDVHQGV…ELKAQLSTIL (250 aa)). The active-site Proton acceptor is the D546. Y570 is modified (phosphotyrosine). Phosphotyrosine; by RET and SRC is present on residues Y576 and Y577. S580 carries the phosphoserine modification. Positions 685-697 (VQQEERMRMESRR) are enriched in basic and acidic residues. Disordered regions lie at residues 685-734 (VQQE…PSPQ) and 837-921 (VRLS…DRSN). Positions 707–1052 (GSDEAPPKPS…LKMLGQTRPH (346 aa)) are interaction with TGFB1I1. S722 bears the Phosphoserine mark. S732 is modified (phosphoserine; by CDK5). The span at 837 to 849 (VRLSRGSIDREDG) shows a compositional bias: basic and acidic residues. A Phosphoserine modification is found at S843. Phosphotyrosine is present on Y861. Residues 869 to 880 (PAAPPKKPPRPG) show a composition bias toward pro residues. Residues 886-896 (SNLSSISSPAD) are compositionally biased toward polar residues. Position 910 is a phosphoserine (S910). Residues 912 to 1052 (PPTANLDRSN…LKMLGQTRPH (141 aa)) are interaction with ARHGEF28. T914 is subject to Phosphothreonine. Position 925 is a phosphotyrosine; by SRC (Y925).

The protein belongs to the protein kinase superfamily. Tyr protein kinase family. FAK subfamily. Interacts with GIT1. Component of a complex that contains at least FER, CTTN and PTK2/FAK1. Interacts with BMX. Interacts with STEAP4. Interacts with ZFYVE21. Interacts with ESR1. Interacts with FGR, FLT4 and RET. Interacts with EPHA2 in resting cells; activation of EPHA2 recruits PTPN11, leading to dephosphorylation of PTK2/FAK1 and dissociation of the complex. Interacts with EPHA1 (kinase activity-dependent). Interacts with MISP. Interacts with PIAS1. Interacts with ARHGAP26 and SHC1. Interacts with RB1CC1; this inhibits PTK2/FAK1 activity and activation of downstream signaling pathways. Interacts with P53/TP53. Interacts with STAT1. Interacts with WASL. Interacts with ARHGEF7. Interacts with DCC. Interacts (via first Pro-rich region) with CAS family members (via SH3 domain), including BCAR1, BCAR3 and CASS4. Interacts with NEDD9 (via C-terminus). Interacts with SORBS1. Interacts with ARHGEF28. Interacts with SHB. Part of a complex composed of THSD1, PTK2/FAK1, TLN1 and VCL. Interacts with PXN and TLN1. Interacts with TGFB1I1. Interacts with PIK3R1 or PIK3R2. Interacts with SRC, GRB2 and GRB7. Interacts with LPXN (via LD motif 3). Interacts with CD36. Interacts with EMP2; regulates PTK2 activation and localization. Interacts with DSCAM. Interacts with AMBRA1. Interacts (when tyrosine-phosphorylated) with tensin TNS1; the interaction is increased by phosphorylation of TNS1. Post-translationally, phosphorylated on tyrosine residues upon activation, e.g. upon integrin signaling. Tyr-397 is the major autophosphorylation site, but other kinases can also phosphorylate this residue. Phosphorylation at Tyr-397 promotes interaction with SRC and SRC family members, leading to phosphorylation at Tyr-576, Tyr-577 and at additional tyrosine residues. FGR promotes phosphorylation at Tyr-397 and Tyr-576. FER promotes phosphorylation at Tyr-577, Tyr-861 and Tyr-925, even when cells are not adherent. Tyr-397, Tyr-576 and Ser-722 are phosphorylated only when cells are adherent. Phosphorylation at Tyr-397 is important for interaction with BMX, PIK3R1 and SHC1. Phosphorylation at Tyr-925 is important for interaction with GRB2. Dephosphorylated by PTPN11; PTPN11 is recruited to PTK2 via EPHA2 (tyrosine phosphorylated). Microtubule-induced dephosphorylation at Tyr-397 is crucial for the induction of focal adhesion disassembly; this dephosphorylation could be catalyzed by PTPN11 and regulated by ZFYVE21. Phosphorylation on tyrosine residues is enhanced by NTN1. In terms of processing, sumoylated; this enhances autophosphorylation.

It localises to the cell junction. The protein resides in the focal adhesion. It is found in the cell membrane. The protein localises to the cytoplasm. Its subcellular location is the perinuclear region. It localises to the cell cortex. The protein resides in the cytoskeleton. It is found in the microtubule organizing center. The protein localises to the centrosome. Its subcellular location is the nucleus. It localises to the cilium basal body. It carries out the reaction L-tyrosyl-[protein] + ATP = O-phospho-L-tyrosyl-[protein] + ADP + H(+). Its activity is regulated as follows. Subject to autoinhibition, mediated by interactions between the FERM domain and the kinase domain. Activated by autophosphorylation at Tyr-397. This promotes interaction with SRC and phosphorylation at Tyr-576 and Tyr-577 in the kinase activation loop by SRC. Phosphorylation at Tyr-397, Tyr-576 and Tyr-577 is required for maximal kinase activity. Its function is as follows. Non-receptor protein-tyrosine kinase that plays an essential role in regulating cell migration, adhesion, spreading, reorganization of the actin cytoskeleton, formation and disassembly of focal adhesions and cell protrusions, cell cycle progression, cell proliferation and apoptosis. Required for early embryonic development and placenta development. Required for embryonic angiogenesis, normal cardiomyocyte migration and proliferation, and normal heart development. Regulates axon growth and neuronal cell migration, axon branching and synapse formation; required for normal development of the nervous system. Plays a role in osteogenesis and differentiation of osteoblasts. Functions in integrin signal transduction, but also in signaling downstream of numerous growth factor receptors, G-protein coupled receptors (GPCR), EPHA2, netrin receptors and LDL receptors. Forms multisubunit signaling complexes with SRC and SRC family members upon activation; this leads to the phosphorylation of additional tyrosine residues, creating binding sites for scaffold proteins, effectors and substrates. Regulates numerous signaling pathways. Promotes activation of phosphatidylinositol 3-kinase and the AKT1 signaling cascade. Promotes activation of MAPK1/ERK2, MAPK3/ERK1 and the MAP kinase signaling cascade. Promotes localized and transient activation of guanine nucleotide exchange factors (GEFs) and GTPase-activating proteins (GAPs), and thereby modulates the activity of Rho family GTPases. Signaling via CAS family members mediates activation of RAC1. Phosphorylates NEDD9 following integrin stimulation. Recruits the ubiquitin ligase MDM2 to P53/TP53 in the nucleus, and thereby regulates P53/TP53 activity, P53/TP53 ubiquitination and proteasomal degradation. Phosphorylates SRC; this increases SRC kinase activity. Phosphorylates ACTN1, ARHGEF7, GRB7, RET and WASL. Promotes phosphorylation of PXN and STAT1; most likely PXN and STAT1 are phosphorylated by a SRC family kinase that is recruited to autophosphorylated PTK2/FAK1, rather than by PTK2/FAK1 itself. Promotes phosphorylation of BCAR1; GIT2 and SHC1; this requires both SRC and PTK2/FAK1. Promotes phosphorylation of BMX and PIK3R1. Does not contain a kinase domain and inhibits PTK2/FAK1 phosphorylation and signaling. Its enhanced expression can attenuate the nuclear accumulation of LPXN and limit its ability to enhance serum response factor (SRF)-dependent gene transcription. This is Focal adhesion kinase 1 from Mus musculus (Mouse).